Consider the following 450-residue polypeptide: Phosphoglucosamine mutase (450 aa).

Ser101 (phosphoserine intermediate) is an active-site residue. Ser101, Asp242, Asp244, and Asp246 together coordinate Mg(2+). At Ser101 the chain carries Phosphoserine.

This sequence belongs to the phosphohexose mutase family. It depends on Mg(2+) as a cofactor. In terms of processing, activated by phosphorylation.

It catalyses the reaction alpha-D-glucosamine 1-phosphate = D-glucosamine 6-phosphate. In terms of biological role, catalyzes the conversion of glucosamine-6-phosphate to glucosamine-1-phosphate. In Rhodopseudomonas palustris (strain BisB5), this protein is Phosphoglucosamine mutase.